The sequence spans 186 residues: Peptidyl-tRNA hydrolase (186 aa).

Tyr14 provides a ligand contact to tRNA. The active-site Proton acceptor is the His19. Residues Tyr64, Asn66, and Asn112 each contribute to the tRNA site.

This sequence belongs to the PTH family. As to quaternary structure, monomer.

Its subcellular location is the cytoplasm. It catalyses the reaction an N-acyl-L-alpha-aminoacyl-tRNA + H2O = an N-acyl-L-amino acid + a tRNA + H(+). In terms of biological role, hydrolyzes ribosome-free peptidyl-tRNAs (with 1 or more amino acids incorporated), which drop off the ribosome during protein synthesis, or as a result of ribosome stalling. Its function is as follows. Catalyzes the release of premature peptidyl moieties from peptidyl-tRNA molecules trapped in stalled 50S ribosomal subunits, and thus maintains levels of free tRNAs and 50S ribosomes. This is Peptidyl-tRNA hydrolase from Bacillus cereus (strain ATCC 14579 / DSM 31 / CCUG 7414 / JCM 2152 / NBRC 15305 / NCIMB 9373 / NCTC 2599 / NRRL B-3711).